The following is a 115-amino-acid chain: Large ribosomal subunit protein bL19 (115 aa).

It belongs to the bacterial ribosomal protein bL19 family.

In terms of biological role, this protein is located at the 30S-50S ribosomal subunit interface and may play a role in the structure and function of the aminoacyl-tRNA binding site. The chain is Large ribosomal subunit protein bL19 from Bacillus licheniformis (strain ATCC 14580 / DSM 13 / JCM 2505 / CCUG 7422 / NBRC 12200 / NCIMB 9375 / NCTC 10341 / NRRL NRS-1264 / Gibson 46).